A 414-amino-acid polypeptide reads, in one-letter code: Protein SOSEKI 2 (414 aa).

Positions 44-135 (RRVQVVYYLT…YVLKGSEITD (92 aa)) are DIX-like oligomerization domain. The tract at residues 171–273 (SFDDAELYVG…GDPVEPGSGR (103 aa)) is disordered. Residues 173-192 (DDAELYVGEEEEEEDGEYEL) are compositionally biased toward acidic residues. The span at 205–229 (PQSRCSRGVSTETMESTEQKPNLTK) shows a compositional bias: polar residues. Over residues 230 to 242 (TEQDLQVRSDSSD) the composition is skewed to basic and acidic residues. An Association to cell membranes motif is present at residues 283 to 284 (CG).

The protein belongs to the SOSEKI family. As to quaternary structure, homodimer. Forms long polymer filaments with other SOKs proteins polymers (e.g. SOK1, SOK2, SOK3 and SOK4) crucial for polar localization and biological activity. Binds to ANGUSTIFOLIA (AN). In terms of tissue distribution, expressed during embryogenesis and in roots.

It localises to the cell membrane. In terms of biological role, part of a three-gene cluster containing FLC, UFC and DFC, which is coordinately regulated in response to vernalization. Also regulated by FLX. SOSEKI proteins (SOK1-5) locally interpret global polarity cues and can influence cell division orientation to coordinate cell polarization relative to body axes, probably by guiding ANGUSTIFOLIA (AN) polarized localization. The polypeptide is Protein SOSEKI 2 (Arabidopsis thaliana (Mouse-ear cress)).